The following is a 186-amino-acid chain: MRILGIDPGLQTTGFGVVDVDGHRLRYVASGTVRTTGRATGLALGDLPGRLKVLFDGVSEVAARYQPSTAAVEIIFVNVNPQSTLLLGQARGAALTALVNANLPVAEYTALQMKKAVVGHGRAAKSQVQEMVRRLLELPGLPGTDAADALGLAITHAHAGAAMARVGEVAQLTRRQHAMYKAGRSY.

Residues Asp7, Glu73, and Asp145 contribute to the active site. Residues Asp7, Glu73, and Asp145 each contribute to the Mg(2+) site.

This sequence belongs to the RuvC family. Homodimer which binds Holliday junction (HJ) DNA. The HJ becomes 2-fold symmetrical on binding to RuvC with unstacked arms; it has a different conformation from HJ DNA in complex with RuvA. In the full resolvosome a probable DNA-RuvA(4)-RuvB(12)-RuvC(2) complex forms which resolves the HJ. The cofactor is Mg(2+).

It localises to the cytoplasm. The enzyme catalyses Endonucleolytic cleavage at a junction such as a reciprocal single-stranded crossover between two homologous DNA duplexes (Holliday junction).. Its function is as follows. The RuvA-RuvB-RuvC complex processes Holliday junction (HJ) DNA during genetic recombination and DNA repair. Endonuclease that resolves HJ intermediates. Cleaves cruciform DNA by making single-stranded nicks across the HJ at symmetrical positions within the homologous arms, yielding a 5'-phosphate and a 3'-hydroxyl group; requires a central core of homology in the junction. The consensus cleavage sequence is 5'-(A/T)TT(C/G)-3'. Cleavage occurs on the 3'-side of the TT dinucleotide at the point of strand exchange. HJ branch migration catalyzed by RuvA-RuvB allows RuvC to scan DNA until it finds its consensus sequence, where it cleaves and resolves the cruciform DNA. The polypeptide is Crossover junction endodeoxyribonuclease RuvC (Acidovorax sp. (strain JS42)).